We begin with the raw amino-acid sequence, 154 residues long: Myoglobin (154 aa).

The region spanning 2–148 is the Globin domain; it reads GLSDGEWQLV…FRNDMAAQYK (147 aa). Residue Ser-4 is modified to Phosphoserine. His-65 is a binding site for nitrite. His-65 lines the O2 pocket. Phosphothreonine is present on Thr-68. His-94 is a heme b binding site.

This sequence belongs to the globin family. As to quaternary structure, monomeric.

The protein resides in the cytoplasm. It localises to the sarcoplasm. It carries out the reaction Fe(III)-heme b-[protein] + nitric oxide + H2O = Fe(II)-heme b-[protein] + nitrite + 2 H(+). It catalyses the reaction H2O2 + AH2 = A + 2 H2O. In terms of biological role, monomeric heme protein which primary function is to store oxygen and facilitate its diffusion within muscle tissues. Reversibly binds oxygen through a pentacoordinated heme iron and enables its timely and efficient release as needed during periods of heightened demand. Depending on the oxidative conditions of tissues and cells, and in addition to its ability to bind oxygen, it also has a nitrite reductase activity whereby it regulates the production of bioactive nitric oxide. Under stress conditions, like hypoxia and anoxia, it also protects cells against reactive oxygen species thanks to its pseudoperoxidase activity. This is Myoglobin (MB) from Cervus elaphus (Red deer).